The sequence spans 336 residues: MIEADRLIQPQVIEPDEVVDRAMRPKLLDEYTGQDDTRAQLKIFIEAAQKRGEALDHMLIYGPPGLGKTTLAMIVANEMGVNIKSTSGPVLEKAGDLAALLTNLEENDVLFIDEIHRLSPVVEEILYPAMEDYQLDIMIGEGPAARSIKLDLPPFTLVGATTQAGSLTSPLRARFGIPLRLEFYNIKDLSTIVIRSAKVMELEIDEEGAIEIARRSRGTPRIANRLLRRVRDFAEVKHSGAVTKVVAELALDMLDVDAEGFDYMDRKLLLAIIDKFMGGPVGLDNLAAAIGEERETIEDVLEPFLIQQGFVQRTPRGRIATQRAYNHFNLIQPEAK.

The interval 4-184 is large ATPase domain (RuvB-L); the sequence is ADRLIQPQVI…FGIPLRLEFY (181 aa). ATP is bound by residues Arg24, Gly65, Lys68, Thr69, Thr70, 131–133, Arg174, Tyr184, and Arg221; that span reads EDY. Thr69 lines the Mg(2+) pocket. The interval 185–255 is small ATPAse domain (RuvB-S); the sequence is NIKDLSTIVI…VAELALDMLD (71 aa). The segment at 258 to 336 is head domain (RuvB-H); that stretch reads AEGFDYMDRK…HFNLIQPEAK (79 aa). DNA-binding residues include Arg294, Arg313, and Arg318.

The protein belongs to the RuvB family. Homohexamer. Forms an RuvA(8)-RuvB(12)-Holliday junction (HJ) complex. HJ DNA is sandwiched between 2 RuvA tetramers; dsDNA enters through RuvA and exits via RuvB. An RuvB hexamer assembles on each DNA strand where it exits the tetramer. Each RuvB hexamer is contacted by two RuvA subunits (via domain III) on 2 adjacent RuvB subunits; this complex drives branch migration. In the full resolvosome a probable DNA-RuvA(4)-RuvB(12)-RuvC(2) complex forms which resolves the HJ.

It is found in the cytoplasm. The catalysed reaction is ATP + H2O = ADP + phosphate + H(+). Functionally, the RuvA-RuvB-RuvC complex processes Holliday junction (HJ) DNA during genetic recombination and DNA repair, while the RuvA-RuvB complex plays an important role in the rescue of blocked DNA replication forks via replication fork reversal (RFR). RuvA specifically binds to HJ cruciform DNA, conferring on it an open structure. The RuvB hexamer acts as an ATP-dependent pump, pulling dsDNA into and through the RuvAB complex. RuvB forms 2 homohexamers on either side of HJ DNA bound by 1 or 2 RuvA tetramers; 4 subunits per hexamer contact DNA at a time. Coordinated motions by a converter formed by DNA-disengaged RuvB subunits stimulates ATP hydrolysis and nucleotide exchange. Immobilization of the converter enables RuvB to convert the ATP-contained energy into a lever motion, pulling 2 nucleotides of DNA out of the RuvA tetramer per ATP hydrolyzed, thus driving DNA branch migration. The RuvB motors rotate together with the DNA substrate, which together with the progressing nucleotide cycle form the mechanistic basis for DNA recombination by continuous HJ branch migration. Branch migration allows RuvC to scan DNA until it finds its consensus sequence, where it cleaves and resolves cruciform DNA. This chain is Holliday junction branch migration complex subunit RuvB, found in Shewanella piezotolerans (strain WP3 / JCM 13877).